The chain runs to 148 residues: FAD synthase (148 aa).

Residues 11–12 (TF), 16–19 (HPGH), asparagine 94, and tyrosine 121 each bind ATP.

Belongs to the archaeal FAD synthase family. As to quaternary structure, homodimer. Requires a divalent metal cation as cofactor.

It catalyses the reaction FMN + ATP + H(+) = FAD + diphosphate. Its pathway is cofactor biosynthesis; FAD biosynthesis; FAD from FMN: step 1/1. Catalyzes the transfer of the AMP portion of ATP to flavin mononucleotide (FMN) to produce flavin adenine dinucleotide (FAD) coenzyme. In Methanoregula boonei (strain DSM 21154 / JCM 14090 / 6A8), this protein is FAD synthase.